The primary structure comprises 178 residues: Ribosome maturation factor RimP (178 aa).

Belongs to the RimP family.

Its subcellular location is the cytoplasm. Required for maturation of 30S ribosomal subunits. The protein is Ribosome maturation factor RimP of Mycolicibacterium gilvum (strain PYR-GCK) (Mycobacterium gilvum (strain PYR-GCK)).